A 464-amino-acid polypeptide reads, in one-letter code: MSTDKTNQSWGGRFSEPVDAFVARFTASVTFDQRLYRHDIMGSIAHATMLAKVGVLTDAERDTIVDGLNTIQAEIEAGQFDWRVDLEDVHMNIEARLTDRIGITGKKLHTGRSRNDQVATDIRLWLRDEIDLILSEITRLQQGLLGQAEREAETIMPGFTHLQTAQPVTFGHHMLAWFEMLSRDYERLVDCRKRLNRMPLGSAALAGTTYPIDRELTCTLLGFEVVGGNSLDGVSDRDFAIEFCSAASIAMMHLSRFSEELVLWTSAQFQFIDLPDRFCTGSSIMPQKKNPDVPELVRGKSGRVFGALMGLLTLMKGQPLAYNKDNQEDKEPLFDAADTLRDSLRAFADMIPAIKPRHAMMREAALRGFSTATDLADYLVRRGLPFRDCHEIVGHAVKYGVETGKDLAEMSLEELRQFSNQIEQDVFAVLTLEGSVNARNHIGGTAPEQVRAAVIRGQELLAGR.

Belongs to the lyase 1 family. Argininosuccinate lyase subfamily.

It is found in the cytoplasm. It catalyses the reaction 2-(N(omega)-L-arginino)succinate = fumarate + L-arginine. It functions in the pathway amino-acid biosynthesis; L-arginine biosynthesis; L-arginine from L-ornithine and carbamoyl phosphate: step 3/3. This is Argininosuccinate lyase from Pseudomonas syringae pv. syringae (strain B728a).